Consider the following 109-residue polypeptide: UPF0060 membrane protein PSPA7_1846 (109 aa).

A run of 4 helical transmembrane segments spans residues 5–25 (LWFVLAAFCEIAGCYAFYLWL), 27–47 (LGKSALWVLPGLLSLSLFALL), 59–79 (AYAAYGGIYVAASLFWLAFVE), and 84–104 (LWSDWLGVALCVLGASIVLFG).

This sequence belongs to the UPF0060 family.

It localises to the cell inner membrane. This is UPF0060 membrane protein PSPA7_1846 from Pseudomonas paraeruginosa (strain DSM 24068 / PA7) (Pseudomonas aeruginosa (strain PA7)).